The sequence spans 885 residues: MQTADIRNAWLTYFGDRGHTVVPSASLVSDDPTLLFTVAGMVPFVPYLTGVVPAPFARATSVQKCIRTLDIEEVGRTPRHGTFFQMNGNFSFGDYFKEQAIAYAWELLTTSEADGGLGFSPDDLWVTVYHEDDEARQAWKRIAGLPDERIQGLGRDTNYWHTGQPGPAGPCSEIFFDRGPAYGADGGPATDDDRYVEIWNLVFMQYLRGAGTGKSDFEILGDLPTRNIDTGMGLERVAFIKQGVENMYETDQVRPVLDRAAELSGRRYGADHEDDVRMRIVADHVRSSVMLMSDGVRPSNEGRGYILRRLMRRTVRAMRLMGVDAATFGELFPASRDAMKAAYPEVSDDFDRISRLAYAEEETFLRTLSGGTTILDVAVGETKAKGGERIAGDTAFLLHDTFGFPIDLTLEMAEENGLTVDREAFDRLMLEQRTRAKADAKSKKTALADLTVYSEFRAAGETRFTGYDELETGTTILGLIVGGHSVDHAVAGDIAEVILPETSLYAESGGQEADAGSIVGQGFDLEVLDVQKPVKGLISHRVQVRSGEVGVGDAATTIVDADWRRGATQAHSGTHLVHAALRQVLGQDAHQSGSYNRAGYMRLDFAWNQALSPATRSEIEDIANGAVRDDLQVVTRVMPIDEAKQLGAMALFGEKYGDTVRVVDIGGPWSRELCAGTHVSSSAQIGLINVVGESSVGSTNRRIESLVGREAFQDLAVERAIVSQLTSSLKTPREQLPDRIADLLQNLKTAERRIADFEAQALQQRVPTLLAQGSRVGSVTLIQESLGSVRSADEVRQLVTLVRERAGSDPVVVALAGDAGGKPTVIVATNQAARDAGAKAGQLARAAAAVLGGGGGGKDDLAQGGGSDVSAIGEALAAVRQALDS.

Zn(2+) is bound by residues His571, His575, Cys674, and His678.

It belongs to the class-II aminoacyl-tRNA synthetase family. Zn(2+) serves as cofactor.

Its subcellular location is the cytoplasm. It carries out the reaction tRNA(Ala) + L-alanine + ATP = L-alanyl-tRNA(Ala) + AMP + diphosphate. Functionally, catalyzes the attachment of alanine to tRNA(Ala) in a two-step reaction: alanine is first activated by ATP to form Ala-AMP and then transferred to the acceptor end of tRNA(Ala). Also edits incorrectly charged Ser-tRNA(Ala) and Gly-tRNA(Ala) via its editing domain. The chain is Alanine--tRNA ligase from Clavibacter sepedonicus (Clavibacter michiganensis subsp. sepedonicus).